The sequence spans 37 residues: Lambda-hexatoxin-Hf1a (37 aa).

Cystine bridges form between Cys4-Cys18, Cys11-Cys23, Cys14-Cys15, and Cys17-Cys34.

It belongs to the neurotoxin 11 (kappa toxin) family. As to expression, expressed by the venom gland.

Its subcellular location is the secreted. In terms of biological role, this excitatory toxin inhibits insect calcium-activated potassium (KCa) channels (Slo-type). The protein is Lambda-hexatoxin-Hf1a of Hadronyche formidabilis (Northern tree funnel-web spider).